The sequence spans 245 residues: tRNA1(Val) (adenine(37)-N6)-methyltransferase (245 aa).

Belongs to the methyltransferase superfamily. tRNA (adenine-N(6)-)-methyltransferase family.

The protein localises to the cytoplasm. It carries out the reaction adenosine(37) in tRNA1(Val) + S-adenosyl-L-methionine = N(6)-methyladenosine(37) in tRNA1(Val) + S-adenosyl-L-homocysteine + H(+). In terms of biological role, specifically methylates the adenine in position 37 of tRNA(1)(Val) (anticodon cmo5UAC). The protein is tRNA1(Val) (adenine(37)-N6)-methyltransferase of Escherichia coli O6:K15:H31 (strain 536 / UPEC).